The primary structure comprises 343 residues: Phosphate acyltransferase (343 aa).

This sequence belongs to the PlsX family. Homodimer. Probably interacts with PlsY.

Its subcellular location is the cytoplasm. The catalysed reaction is a fatty acyl-[ACP] + phosphate = an acyl phosphate + holo-[ACP]. The protein operates within lipid metabolism; phospholipid metabolism. Functionally, catalyzes the reversible formation of acyl-phosphate (acyl-PO(4)) from acyl-[acyl-carrier-protein] (acyl-ACP). This enzyme utilizes acyl-ACP as fatty acyl donor, but not acyl-CoA. The protein is Phosphate acyltransferase of Halorhodospira halophila (strain DSM 244 / SL1) (Ectothiorhodospira halophila (strain DSM 244 / SL1)).